A 566-amino-acid chain; its full sequence is Chaperonin GroEL 1 (566 aa).

ATP is bound by residues 29-32, 86-90, Gly-413, and Asp-492; these read TIGP and DGTTT. The interval 520 to 540 is disordered; sequence DKPEPPAPAGDGGGDPMGGMG. Residues 529 to 540 show a composition bias toward gly residues; the sequence is GDGGGDPMGGMG.

This sequence belongs to the chaperonin (HSP60) family. As to quaternary structure, forms a cylinder of 14 subunits composed of two heptameric rings stacked back-to-back. Interacts with the co-chaperonin GroES.

The protein resides in the cytoplasm. It catalyses the reaction ATP + H2O + a folded polypeptide = ADP + phosphate + an unfolded polypeptide.. Together with its co-chaperonin GroES, plays an essential role in assisting protein folding. The GroEL-GroES system forms a nano-cage that allows encapsulation of the non-native substrate proteins and provides a physical environment optimized to promote and accelerate protein folding. In Prochlorococcus marinus (strain MIT 9313), this protein is Chaperonin GroEL 1.